Consider the following 267-residue polypeptide: MFDKHTHTLIAQRLDQAEKQREQIRAISLDYPEITIEDAYAVQREWVRLKIAEGRTLKGHKIGLTSKAMQASSQISEPDYGALLDDMFFHDGSDIPTDRFIVPRIEVELAFVLAKPLRGPNCTLFDVYNATDYVIPALELIDARCHNIDPETQRPRKVFDTISDNAANAGVILGGRPIKPDELDLRWISALMYRNGVIEETGVAAGVLNHPANGVAWLANKLAPYDVQLEAGQIILGGSFTRPVPARKGDTFHVDYGNMGSISCRFV.

3 residues coordinate Mg(2+): Glu-106, Glu-108, and Glu-139.

Belongs to the hydratase/decarboxylase family. Homodecamer. It depends on Mg(2+) as a cofactor.

The catalysed reaction is (4Z)-2-oxohept-4-enedioate + H2O = (4S)-4-hydroxy-2-oxoheptanedioate. The protein operates within aromatic compound metabolism; 4-hydroxyphenylacetate degradation; pyruvate and succinate semialdehyde from 4-hydroxyphenylacetate: step 6/7. Its function is as follows. Transforms 2-oxo-hept-4-ene-1,7-dioate (OHED) into 4-hydroxy-2-oxoheptanedioate, a step in the 4-hydroxyphenylacetic acid (4-HPA) degradation pathway. This chain is 2-oxo-hept-4-ene-1,7-dioate hydratase, found in Escherichia coli.